The sequence spans 105 residues: UPF0145 protein LPC_0273 (105 aa).

This sequence belongs to the UPF0145 family.

The chain is UPF0145 protein LPC_0273 from Legionella pneumophila (strain Corby).